Consider the following 173-residue polypeptide: Protein FAM180A (173 aa).

The first 17 residues, 1–17, serve as a signal peptide directing secretion; that stretch reads MSWKALTILLVFSSTQA.

It belongs to the FAM180 family.

Its subcellular location is the secreted. This Mus musculus (Mouse) protein is Protein FAM180A (Fam180a).